A 190-amino-acid chain; its full sequence is Sec-independent protein translocase protein TatB (190 aa).

A helical transmembrane segment spans residues 2 to 22 (LPDIGGTELLVIAAVALIVVG). The segment at 130-190 (IVSKPARKPP…KASTNSDITS (61 aa)) is disordered. Over residues 134–144 (PARKPPAKKAA) the composition is skewed to basic residues. A compositionally biased stretch (low complexity) spans 145-163 (AKPAAKAELVSKPKASAKA).

This sequence belongs to the TatB family. As to quaternary structure, the Tat system comprises two distinct complexes: a TatABC complex, containing multiple copies of TatA, TatB and TatC subunits, and a separate TatA complex, containing only TatA subunits. Substrates initially bind to the TatABC complex, which probably triggers association of the separate TatA complex to form the active translocon.

Its subcellular location is the cell inner membrane. In terms of biological role, part of the twin-arginine translocation (Tat) system that transports large folded proteins containing a characteristic twin-arginine motif in their signal peptide across membranes. Together with TatC, TatB is part of a receptor directly interacting with Tat signal peptides. TatB may form an oligomeric binding site that transiently accommodates folded Tat precursor proteins before their translocation. This chain is Sec-independent protein translocase protein TatB, found in Caulobacter sp. (strain K31).